A 420-amino-acid polypeptide reads, in one-letter code: Vitellogenin-3 (420 aa).

Positions 1 to 19 (MMSLRICLLATCLLVAAHA) are cleaved as a signal peptide. Phosphothreonine is present on T37. Phosphoserine is present on residues S177 and S178. A sulfotyrosine mark is found at Y384 and Y390. The tract at residues 401-420 (GQRSPAHKQAAYHGMHHAQN) is disordered.

The protein belongs to the AB hydrolase superfamily. Lipase family. In terms of processing, tyrosine sulfation occurs in the female only and plays an essential functional role. Synthesized in the fat body and ovarian follicle cells and accumulate in the oocyte.

It localises to the secreted. Its function is as follows. Vitellogenin is the major yolk protein of eggs where it is used as a food source during embryogenesis. Vitellogenins and their receptor yl/yolkless are required for maintenance of microtubule plus-end orientation towards the posterior pole of oocytes. Involved in polarized localization of germ plasm components, such as osk mRNA and vas protein, to the oocyte posterior cortex. Receptor-mediated endocytosis by yl/yolkless is crucial for actin reorganization, mediated by osk isoform A/Long, required to anchor germ plasm components to the oocyte cortex. This chain is Vitellogenin-3 (Yp3), found in Drosophila melanogaster (Fruit fly).